We begin with the raw amino-acid sequence, 95 residues long: Protein TusB (95 aa).

This sequence belongs to the DsrH/TusB family. As to quaternary structure, heterohexamer, formed by a dimer of trimers. The hexameric TusBCD complex contains 2 copies each of TusB, TusC and TusD. The TusBCD complex interacts with TusE.

The protein resides in the cytoplasm. Part of a sulfur-relay system required for 2-thiolation of 5-methylaminomethyl-2-thiouridine (mnm(5)s(2)U) at tRNA wobble positions. The sequence is that of Protein TusB from Salmonella agona (strain SL483).